The chain runs to 471 residues: Glutamate--tRNA ligase (471 aa).

The short motif at 9 to 19 (PSPTGYLHVGG) is the 'HIGH' region element. Residues Cys-98, Cys-100, Cys-125, and His-127 each coordinate Zn(2+). The 'KMSKS' region signature appears at 237-241 (KLSKR). Position 240 (Lys-240) interacts with ATP.

Belongs to the class-I aminoacyl-tRNA synthetase family. Glutamate--tRNA ligase type 1 subfamily. In terms of assembly, monomer. The cofactor is Zn(2+).

It localises to the cytoplasm. The enzyme catalyses tRNA(Glu) + L-glutamate + ATP = L-glutamyl-tRNA(Glu) + AMP + diphosphate. Catalyzes the attachment of glutamate to tRNA(Glu) in a two-step reaction: glutamate is first activated by ATP to form Glu-AMP and then transferred to the acceptor end of tRNA(Glu). This Shigella sonnei (strain Ss046) protein is Glutamate--tRNA ligase.